Reading from the N-terminus, the 335-residue chain is Biotin synthase (335 aa).

The Radical SAM core domain occupies 51 to 278 (NTVQLSSLLS…LAKVRLSAGR (228 aa)). [4Fe-4S] cluster contacts are provided by cysteine 66, cysteine 70, and cysteine 73. [2Fe-2S] cluster is bound by residues cysteine 110, cysteine 141, cysteine 201, and arginine 273.

It belongs to the radical SAM superfamily. Biotin synthase family. Homodimer. The cofactor is [4Fe-4S] cluster. [2Fe-2S] cluster is required as a cofactor.

It carries out the reaction (4R,5S)-dethiobiotin + (sulfur carrier)-SH + 2 reduced [2Fe-2S]-[ferredoxin] + 2 S-adenosyl-L-methionine = (sulfur carrier)-H + biotin + 2 5'-deoxyadenosine + 2 L-methionine + 2 oxidized [2Fe-2S]-[ferredoxin]. Its pathway is cofactor biosynthesis; biotin biosynthesis; biotin from 7,8-diaminononanoate: step 2/2. Its function is as follows. Catalyzes the conversion of dethiobiotin (DTB) to biotin by the insertion of a sulfur atom into dethiobiotin via a radical-based mechanism. This chain is Biotin synthase, found in Bordetella pertussis (strain Tohama I / ATCC BAA-589 / NCTC 13251).